The chain runs to 734 residues: Adhesion G protein-coupled receptor E5 (734 aa).

An N-terminal signal peptide occupies residues 1–26; the sequence is MGGPHGGPFLLFHVLCFLLTLSEVGS. At 27–449 the chain is on the extracellular side; the sequence is QNSKACALPC…VEDPKLALIT (423 aa). An EGF-like 1 domain is found at 28-70; sequence NSKACALPCPPNSSCVNGTACRCAPGFISFSGEIFTDPLESCD. 9 cysteine pairs are disulfide-bonded: Cys32–Cys42, Cys36–Cys48, Cys50–Cys69, Cys75–Cys89, Cys83–Cys98, Cys100–Cys121, Cys127–Cys140, Cys134–Cys149, and Cys151–Cys170. N-linked (GlcNAc...) asparagine glycosylation is found at Asn39 and Asn44. The region spanning 71–122 is the EGF-like 2; calcium-binding domain; it reads DINECGPPSPVDCGSSADCQNTEGGYYCTCSPGYEPVSGAMIFRNESENTCR. N-linked (GlcNAc...) asparagine glycans are attached at residues Asn115 and Asn136. Positions 123–171 constitute an EGF-like 3; calcium-binding domain; it reads DVDECSSGQHQCHNSTVCFNTVGSYTCHCREGWEPKHGLKNKQKDTICK. One can recognise a GAIN-B domain in the interval 265–441; that stretch reads TYRSLDNTEL…AILMAHYDVE (177 aa). Residues Asn285, Asn327, Asn372, Asn403, and Asn418 are each glycosylated (N-linked (GlcNAc...) asparagine). 2 cysteine pairs are disulfide-bonded: Cys393–Cys423 and Cys411–Cys425. Residues 393–441 are GPS; the sequence is CAFWKKDSNGNGSWATTGCWKMGRGNGSITCQCSHLSSFAILMAHYDVE. The chain crosses the membrane as a helical span at residues 450–470; that stretch reads KVGLALSLACLLLCILTFLLV. Over 471–478 the chain is Cytoplasmic; it reads RPIQGSRT. Residues 479-499 traverse the membrane as a helical segment; that stretch reads TVHLHLCICLFVGSAIFLAGI. At 500-519 the chain is on the extracellular side; sequence ENEGGEVGTRCRLVAVLLHY. A helical membrane pass occupies residues 520–540; sequence CFLAAFCWMSLEGVELYFLVV. Residues 541 to 550 lie on the Cytoplasmic side of the membrane; the sequence is RVFQGQGMRK. Residues 551-571 traverse the membrane as a helical segment; the sequence is LWLCLIGYGVPLIIVGISAGA. Topologically, residues 572–593 are extracellular; sequence YSKGYGREKFCWLNFEGGFLWS. The helical transmembrane segment at 594–614 threads the bilayer; it reads FVGPVTFIVLGNAIIFVITVW. At 615 to 637 the chain is on the cytoplasmic side; it reads KLTQKFSEINPDIKKLKKARVLT. A helical transmembrane segment spans residues 638-658; it reads ITAIAQLFVLGCTWVFGLLLF. Residues 659-662 lie on the Extracellular side of the membrane; it reads NPES. A helical membrane pass occupies residues 663–683; sequence WVLSYIFSILNCLQGFFLFVL. Residues 684-734 are Cytoplasmic-facing; that stretch reads YCLLNKKVREEYRKWACMVAGNKYSEFATTTSGSGSSHNQTQALRPSESGM. The tract at residues 712-734 is disordered; the sequence is TTTSGSGSSHNQTQALRPSESGM. Thr713 carries the phosphothreonine modification. Residue Ser715 is modified to Phosphoserine. Thr724 carries the post-translational modification Phosphothreonine. Phosphoserine is present on residues Ser730 and Ser732.

This sequence belongs to the G-protein coupled receptor 2 family. LN-TM7 subfamily. As to quaternary structure, forms a heterodimer, consisting of a large extracellular region (alpha subunit) non-covalently linked to a seven-transmembrane moiety (beta subunit). Interacts with complement decay-accelerating factor (DAF) and with chondroitin sulfate. Post-translationally, proteolytically cleaved into 2 subunits, an extracellular alpha subunit and a seven-transmembrane subunit.

It is found in the cell membrane. The protein resides in the secreted. It localises to the extracellular space. Its function is as follows. Receptor potentially involved in both adhesion and signaling processes early after leukocyte activation. Plays an essential role in leukocyte migration. This chain is Adhesion G protein-coupled receptor E5, found in Bos taurus (Bovine).